A 79-amino-acid chain; its full sequence is Acyl carrier protein (79 aa).

The Carrier domain maps to D2–V77. S37 bears the O-(pantetheine 4'-phosphoryl)serine mark.

It belongs to the acyl carrier protein (ACP) family. In terms of processing, 4'-phosphopantetheine is transferred from CoA to a specific serine of apo-ACP by AcpS. This modification is essential for activity because fatty acids are bound in thioester linkage to the sulfhydryl of the prosthetic group.

Its subcellular location is the cytoplasm. It functions in the pathway lipid metabolism; fatty acid biosynthesis. In terms of biological role, carrier of the growing fatty acid chain in fatty acid biosynthesis. The chain is Acyl carrier protein from Cupriavidus pinatubonensis (strain JMP 134 / LMG 1197) (Cupriavidus necator (strain JMP 134)).